Consider the following 134-residue polypeptide: SNAPIN protein homolog (134 aa).

The stretch at 50-124 forms a coiled coil; it reads QLQAELRGQL…EKEQRRRQAL (75 aa).

Belongs to the SNAPIN family. Component of the biogenesis of lysosome-related organelles complex-1 (BLOC-1) composed of Blos1, Blos2, Blos3, Blos4, Dysb, Muted, Pldn and Snapin. Interacts with Blos2 and Dysb.

The protein localises to the membrane. It is found in the cytoplasm. It localises to the cytosol. Its function is as follows. Component of the biogenesis of lysosome-related organelles complex-1 (BLOC-1) involved in pigment granule biogenesis. May participate in the coupling of lysosomes to microtubule plus-end-directed kinesin motor. The chain is SNAPIN protein homolog from Drosophila melanogaster (Fruit fly).